The primary structure comprises 559 residues: ATP synthase subunit beta-3, mitochondrial (559 aa).

The span at 1–28 shows a compositional bias: low complexity; sequence MASRRILSSLLRSSSSRSTSKSSLIGSR. Positions 1-39 are disordered; it reads MASRRILSSLLRSSSSRSTSKSSLIGSRNPRLLSPGPAH. A mitochondrion-targeting transit peptide spans 1–54; that stretch reads MASRRILSSLLRSSSSRSTSKSSLIGSRNPRLLSPGPAHGAAPCGTLLGRVAEY. At S62 the chain carries Phosphoserine. ATP is bound at residue 234–241; the sequence is GGAGVGKT.

This sequence belongs to the ATPase alpha/beta chains family. As to quaternary structure, F-type ATPases have 2 components, CF(1) - the catalytic core - and CF(0) - the membrane proton channel. CF(1) has five subunits: alpha(3), beta(3), gamma(1), delta(1), epsilon(1). CF(0) has three main subunits: a, b and c.

The protein resides in the mitochondrion. It is found in the mitochondrion inner membrane. It carries out the reaction ATP + H2O + 4 H(+)(in) = ADP + phosphate + 5 H(+)(out). Its function is as follows. Mitochondrial membrane ATP synthase (F(1)F(0) ATP synthase or Complex V) produces ATP from ADP in the presence of a proton gradient across the membrane which is generated by electron transport complexes of the respiratory chain. F-type ATPases consist of two structural domains, F(1) - containing the extramembraneous catalytic core, and F(0) - containing the membrane proton channel, linked together by a central stalk and a peripheral stalk. During catalysis, ATP synthesis in the catalytic domain of F(1) is coupled via a rotary mechanism of the central stalk subunits to proton translocation. Subunits alpha and beta form the catalytic core in F(1). Rotation of the central stalk against the surrounding alpha(3)beta(3) subunits leads to hydrolysis of ATP in three separate catalytic sites on the beta subunits. In Arabidopsis thaliana (Mouse-ear cress), this protein is ATP synthase subunit beta-3, mitochondrial.